The primary structure comprises 171 residues: Peptidyl-prolyl cis-trans isomerase (171 aa).

A PPIase cyclophilin-type domain is found at 7 to 170 (FFDLTIGGAP…KPVVIADCGQ (164 aa)).

Belongs to the cyclophilin-type PPIase family. Expressed in leaves, floral buds, growing shoots and stamens at anthesis.

The protein resides in the cytoplasm. The enzyme catalyses [protein]-peptidylproline (omega=180) = [protein]-peptidylproline (omega=0). Binds cyclosporin A (CsA). CsA mediates some of its effects via an inhibitory action on PPIase. Functionally, PPIases accelerate the folding of proteins. It catalyzes the cis-trans isomerization of proline imidic peptide bonds in oligopeptides. This chain is Peptidyl-prolyl cis-trans isomerase, found in Solanum lycopersicum (Tomato).